The primary structure comprises 324 residues: Hydroxylase/desaturase CTB9 (324 aa).

Polar residues predominate over residues 1-11 (MTSTITTTETL). 2 disordered regions span residues 1 to 33 (MTST…KELP) and 288 to 308 (TARR…EPRA).

The protein belongs to the asaB hydroxylase/desaturase family.

It participates in mycotoxin biosynthesis. In terms of biological role, hydroxylase/desaturase; part of the gene cluster that mediates the biosynthesis of cercosporin, a light-activated, non-host-selective toxin. The perylenequinone chromophore of cercosporin absorbs light energy to attain an electronically-activated triplet state and produces active oxygen species such as the hydroxyl radical, superoxide, hydrogen peroxide or singlet oxygen upon reaction with oxygen molecules. These reactive oxygen species cause damage to various cellular components including lipids, proteins and nucleic acids. The first step of cercosporin biosynthesis is performed by the polyketide synthase CTB1 which catalyzes the formation of nor-toralactone. The starter unit acyltransferase (SAT) domain of CTB1 initiates polyketide extension by the selective utilization of acetyl-CoA, which is elongated to the heptaketide in the beta-ketoacyl synthase (KS) domain by successive condensations with six malonyl units introduced by the malonyl acyltransferase (MAT) domain. The product template (PT) domain catalyzes C4-C9 and C2-C11 aldol cyclizations and dehydrations to a trihydroxynaphthalene, which is thought to be delivered to the thioesterase (TE) domain for product release. The bifunctional enzyme CTB3 then methylates nor-toralactone to toralactone before conducting an unusual oxidative aromatic ring opening. The O-methyltransferase CTB2 further methylates the nascent OH-6 of the CBT3 product, blocking further oxidation at this site before the reductase CTB6 reduces the 2-oxopropyl ketone at position C7, giving naphthalene. The FAD-dependent monooxygenase CTB5 in concert with the multicopper oxidase CTB12 are responsible for homodimerization of naphthalene with CTB7 installing the dioxepine moiety, finally producing cercosporin. The fasciclin domain-containing protein CTB11 might act with CTB5 and CTB12 whereas the roles of CTB9 and CTB10 have still to be elucidated. The protein is Hydroxylase/desaturase CTB9 of Cercospora beticola (Sugarbeet leaf spot fungus).